The chain runs to 207 residues: MLLNQYRKPLRIGVGGPVGSGKTALLEVLCKRMKDSYQLAVVTNDIYTKEDQRILIDANALSADRIVGVETGGCPHTAIREDASMNLLAVEELISKFNNLDIIFIESGGDNLSATFSPELSDLNLYVIDVAAGDKIPRKGGPGITRSDFLIINKIDLAEYVGASLEIMNRDTNLMRKGLPWSFTNLKTGHGVQSVVDFILRQRLYLQ.

GTP is bound at residue 16 to 23; the sequence is GPVGSGKT.

The protein belongs to the SIMIBI class G3E GTPase family. UreG subfamily. As to quaternary structure, homodimer. UreD, UreF and UreG form a complex that acts as a GTP-hydrolysis-dependent molecular chaperone, activating the urease apoprotein by helping to assemble the nickel containing metallocenter of UreC. The UreE protein probably delivers the nickel.

It localises to the cytoplasm. In terms of biological role, facilitates the functional incorporation of the urease nickel metallocenter. This process requires GTP hydrolysis, probably effectuated by UreG. This Blochmanniella pennsylvanica (strain BPEN) protein is Urease accessory protein UreG.